The following is a 393-amino-acid chain: UDP-N-acetylglucosamine--N-acetylmuramyl-(pentapeptide) pyrophosphoryl-undecaprenol N-acetylglucosamine transferase (393 aa).

UDP-N-acetyl-alpha-D-glucosamine-binding positions include 14-16 (TAG), N128, R170, S210, and Q321.

The protein belongs to the glycosyltransferase 28 family. MurG subfamily.

It localises to the cell membrane. The enzyme catalyses di-trans,octa-cis-undecaprenyl diphospho-N-acetyl-alpha-D-muramoyl-L-alanyl-D-glutamyl-meso-2,6-diaminopimeloyl-D-alanyl-D-alanine + UDP-N-acetyl-alpha-D-glucosamine = di-trans,octa-cis-undecaprenyl diphospho-[N-acetyl-alpha-D-glucosaminyl-(1-&gt;4)]-N-acetyl-alpha-D-muramoyl-L-alanyl-D-glutamyl-meso-2,6-diaminopimeloyl-D-alanyl-D-alanine + UDP + H(+). It participates in cell wall biogenesis; peptidoglycan biosynthesis. In terms of biological role, cell wall formation. Catalyzes the transfer of a GlcNAc subunit on undecaprenyl-pyrophosphoryl-MurNAc-pentapeptide (lipid intermediate I) to form undecaprenyl-pyrophosphoryl-MurNAc-(pentapeptide)GlcNAc (lipid intermediate II). In Bifidobacterium adolescentis (strain ATCC 15703 / DSM 20083 / NCTC 11814 / E194a), this protein is UDP-N-acetylglucosamine--N-acetylmuramyl-(pentapeptide) pyrophosphoryl-undecaprenol N-acetylglucosamine transferase.